The following is a 505-amino-acid chain: MVSIRPDEISSIIRQQIEQYSQDVKVENVGTVLQVGDGIARIYGLQQVMSGELVEFEDGTTGIALNLEEDNVGAVLMGEGRNIQEGSTVKATGKIAQIPVGDALVGRVVSPLGAPLDGKGEIAATENRLIESPAPGIIARRSVHEPMQTGITAIDAMIPIGRGQRELIIGDRQTGKTAIAIDTILNQKGEDVICVYVAIGQKASSVANIIEVLRERGALDYTVVVAANASEPATLQYLAPYAGAAIAEYFMYKGKATLVIYDDLTKQAQAYRQMSLLLRRPPGREAYPGDVFYLHSRLLERAAKLSDALGGGSMTALPVIETQAGDVSAYIPTNVISITDGQIFLSSDLFNSGLRPAINVGISVSRVGSAAQTKAIKKIAGTLKLELAQFDELAAFAQFASDLDKATQNQLARGQRLRELLKQPQFSPLILAEQVAVVYAGVKGLIDEIPVNQVTAFVSELRSYLKTSKPEFIEKVQSSKQLDDAAEALLKEAIAEVKKNILAAV.

An ATP-binding site is contributed by 170–177 (GDRQTGKT).

Belongs to the ATPase alpha/beta chains family. In terms of assembly, F-type ATPases have 2 components, CF(1) - the catalytic core - and CF(0) - the membrane proton channel. CF(1) has five subunits: alpha(3), beta(3), gamma(1), delta(1), epsilon(1). CF(0) has four main subunits: a(1), b(1), b'(1) and c(9-12).

The protein resides in the cellular thylakoid membrane. The catalysed reaction is ATP + H2O + 4 H(+)(in) = ADP + phosphate + 5 H(+)(out). Its function is as follows. Produces ATP from ADP in the presence of a proton gradient across the membrane. The alpha chain is a regulatory subunit. This is ATP synthase subunit alpha from Synechococcus sp. (strain ATCC 27144 / PCC 6301 / SAUG 1402/1) (Anacystis nidulans).